A 686-amino-acid chain; its full sequence is MAM domain-containing protein 2 (686 aa).

The signal sequence occupies residues 1-18 (MLLEGVLLVVQALQLASA). MAM domains lie at 24 to 169 (GSCA…YCIE), 168 to 329 (IECD…HCQN), 340 to 498 (TSCD…NCRS), and 507 to 666 (GECT…PCAG). 2 N-linked (GlcNAc...) asparagine glycosylation sites follow: N134 and N329. N524 carries an N-linked (GlcNAc...) asparagine glycan. The tract at residues 665–686 (AGMEDTTEQSSGYSEDLNEIEY) is disordered.

In terms of processing, O-glycosylated; contains chondroitin sulfate.

It localises to the secreted. It is found in the extracellular space. The protein resides in the extracellular matrix. The sequence is that of MAM domain-containing protein 2 (Mamdc2) from Mus musculus (Mouse).